The sequence spans 285 residues: Bifunctional protein FolD (285 aa).

Residues Gly166–Ser168 and Ile232 each bind NADP(+).

The protein belongs to the tetrahydrofolate dehydrogenase/cyclohydrolase family. Homodimer.

It catalyses the reaction (6R)-5,10-methylene-5,6,7,8-tetrahydrofolate + NADP(+) = (6R)-5,10-methenyltetrahydrofolate + NADPH. The enzyme catalyses (6R)-5,10-methenyltetrahydrofolate + H2O = (6R)-10-formyltetrahydrofolate + H(+). Its pathway is one-carbon metabolism; tetrahydrofolate interconversion. Its function is as follows. Catalyzes the oxidation of 5,10-methylenetetrahydrofolate to 5,10-methenyltetrahydrofolate and then the hydrolysis of 5,10-methenyltetrahydrofolate to 10-formyltetrahydrofolate. The sequence is that of Bifunctional protein FolD from Baumannia cicadellinicola subsp. Homalodisca coagulata.